Consider the following 317-residue polypeptide: Proline-rich protein 2 (317 aa).

The first 16 residues, Met-1 to Ala-16, serve as a signal peptide directing secretion. A disordered region spans residues Ser-15–Gln-317. A compositionally biased stretch (pro residues) spans Gln-32–Pro-44. A glycan (N-linked (GlcNAc...) asparagine) is linked at Asn-46. 2 stretches are compositionally biased toward pro residues: residues Gly-51–Gly-183 and Gln-204–Gly-288. Residues Pro-289–Pro-305 are compositionally biased toward low complexity. Positions Gln-306–Gln-317 are enriched in pro residues.

Its subcellular location is the secreted. The sequence is that of Proline-rich protein 2 (Prp2) from Mus musculus (Mouse).